The following is a 333-amino-acid chain: Ig gamma-2B chain C region (333 aa).

3 consecutive Ig-like domains span residues 6–96, 124–223, and 232–328; these read PSVY…KKVE, PSVF…KTIS, and PQVY…KSIS. 3 cysteine pairs are disulfide-bonded: Cys27–Cys80, Cys147–Cys207, and Cys253–Cys311.

The protein is Ig gamma-2B chain C region (Igh-1a) of Rattus norvegicus (Rat).